A 219-amino-acid polypeptide reads, in one-letter code: Glutathione S-transferase (219 aa).

The GST N-terminal domain maps to 2–89 (SQPILGYWDI…YLGRKYKLNG (88 aa)). Residues 8-9 (YW), 44-47 (RSEW), Lys51, 60-61 (NL), and 73-74 (QT) each bind glutathione. A GST C-terminal domain is found at 91-207 (NDHEEIRISM…YIKKQQPKTF (117 aa)). Substrate is bound at residue Tyr117.

Belongs to the GST superfamily. Mu family. Homodimer.

The protein localises to the cytoplasm. The enzyme catalyses RX + glutathione = an S-substituted glutathione + a halide anion + H(+). This Dermatophagoides pteronyssinus (European house dust mite) protein is Glutathione S-transferase.